The primary structure comprises 232 residues: Phosphatidylserine decarboxylase proenzyme (232 aa).

Ser-190 acts as the Schiff-base intermediate with substrate; via pyruvic acid in catalysis. Residue Ser-190 is modified to Pyruvic acid (Ser); by autocatalysis.

This sequence belongs to the phosphatidylserine decarboxylase family. PSD-A subfamily. Heterodimer of a large membrane-associated beta subunit and a small pyruvoyl-containing alpha subunit. Requires pyruvate as cofactor. Post-translationally, is synthesized initially as an inactive proenzyme. Formation of the active enzyme involves a self-maturation process in which the active site pyruvoyl group is generated from an internal serine residue via an autocatalytic post-translational modification. Two non-identical subunits are generated from the proenzyme in this reaction, and the pyruvate is formed at the N-terminus of the alpha chain, which is derived from the carboxyl end of the proenzyme. The post-translation cleavage follows an unusual pathway, termed non-hydrolytic serinolysis, in which the side chain hydroxyl group of the serine supplies its oxygen atom to form the C-terminus of the beta chain, while the remainder of the serine residue undergoes an oxidative deamination to produce ammonia and the pyruvoyl prosthetic group on the alpha chain.

The protein resides in the cell membrane. The enzyme catalyses a 1,2-diacyl-sn-glycero-3-phospho-L-serine + H(+) = a 1,2-diacyl-sn-glycero-3-phosphoethanolamine + CO2. The protein operates within phospholipid metabolism; phosphatidylethanolamine biosynthesis; phosphatidylethanolamine from CDP-diacylglycerol: step 2/2. Its function is as follows. Catalyzes the formation of phosphatidylethanolamine (PtdEtn) from phosphatidylserine (PtdSer). In Cereibacter sphaeroides (strain KD131 / KCTC 12085) (Rhodobacter sphaeroides), this protein is Phosphatidylserine decarboxylase proenzyme.